The chain runs to 72 residues: UPF0270 protein plu0398 (72 aa).

It belongs to the UPF0270 family.

The protein is UPF0270 protein plu0398 of Photorhabdus laumondii subsp. laumondii (strain DSM 15139 / CIP 105565 / TT01) (Photorhabdus luminescens subsp. laumondii).